Reading from the N-terminus, the 351-residue chain is Rhodopsin (351 aa).

At 1–36 (MNGTEGPYFYVPMVNTTGVVRSPYEYPQYYLVNPAA) the chain is on the extracellular side. Asparagine 2 and asparagine 15 each carry an N-linked (GlcNAc...) asparagine glycan. Residues 37 to 61 (FAVLGAYMFFLIIFGFPINFLTLYV) form a helical membrane-spanning segment. Topologically, residues 62–73 (TLEHKKLRTPLN) are cytoplasmic. The chain crosses the membrane as a helical span at residues 74–96 (YILLNLAVADLFMVIGGFTTTMY). The Extracellular segment spans residues 97–110 (SSMHGYFVLGRLGC). A disulfide bridge links cysteine 110 with cysteine 187. A helical transmembrane segment spans residues 111-133 (NLEGFSATLGGMISLWSLAVLAI). A 'Ionic lock' involved in activated form stabilization motif is present at residues 134–136 (ERW). The Cytoplasmic portion of the chain corresponds to 134 to 152 (ERWVVVCKPTSNFRFGENH). A helical membrane pass occupies residues 153-173 (AIMGVSLTWTMALACTVPPLV). At 174 to 202 (GWSRYIPEGMQCSCGIDYYTRAEGFNNES) the chain is on the extracellular side. Asparagine 200 carries N-linked (GlcNAc...) asparagine glycosylation. The chain crosses the membrane as a helical span at residues 203–224 (FVLYMFFCHFMVPLIIIFFCYG). The Cytoplasmic portion of the chain corresponds to 225-252 (RLLCAVKEAAAAQQESETTQRAEREVTR). Residues 253-274 (MVILMVIGYLVCWLPYASVAWF) traverse the membrane as a helical segment. The Extracellular portion of the chain corresponds to 275–286 (IFTHQGSEFGPL). A helical membrane pass occupies residues 287 to 308 (FMTIPAFFAKSSSIYNPVIYIC). Lysine 296 is modified (N6-(retinylidene)lysine). The Cytoplasmic segment spans residues 309–351 (MNKQFRNCMITTLFCGKNPFEGEEEGASSTKTEASSASSVSPA). The S-palmitoyl cysteine moiety is linked to residue cysteine 323. The tract at residues 330 to 351 (GEEEGASSTKTEASSASSVSPA) is disordered. A compositionally biased stretch (low complexity) spans 335-351 (ASSTKTEASSASSVSPA).

Belongs to the G-protein coupled receptor 1 family. Opsin subfamily. Post-translationally, phosphorylated on some or all of the serine and threonine residues present in the C-terminal region. In terms of processing, contains one covalently linked retinal chromophore.

Its subcellular location is the membrane. It localises to the cell projection. The protein resides in the cilium. It is found in the photoreceptor outer segment. Functionally, photoreceptor required for image-forming vision at low light intensity. While most salt water fish species use retinal as chromophore, most freshwater fish use 3-dehydroretinal, or a mixture of retinal and 3-dehydroretinal. Light-induced isomerization of 11-cis to all-trans retinal triggers a conformational change that activates signaling via G-proteins. Subsequent receptor phosphorylation mediates displacement of the bound G-protein alpha subunit by arrestin and terminates signaling. In Neoniphon sammara (Spotfin squirrelfish), this protein is Rhodopsin (rho).